The following is a 210-amino-acid chain: Small ribosomal subunit protein bS6 (210 aa).

Residues 99-210 form a disordered region; the sequence is PLPTKRNTKS…KDTKEVKEEG (112 aa). A compositionally biased stretch (basic and acidic residues) spans 120–210; the sequence is NDTKEVKEAK…KDTKEVKEEG (91 aa).

This sequence belongs to the bacterial ribosomal protein bS6 family.

Binds together with bS18 to 16S ribosomal RNA. This is Small ribosomal subunit protein bS6 from Prochlorococcus marinus (strain SARG / CCMP1375 / SS120).